Reading from the N-terminus, the 54-residue chain is uncharacterized protein (54 aa).

The interval 1 to 38 is disordered; the sequence is MFPNSNGPNKMKALVAPSNSSTTSKTNNNNLPPNGRSS. Residues 17 to 38 show a composition bias toward low complexity; sequence PSNSSTTSKTNNNNLPPNGRSS.

This is an uncharacterized protein from Dictyostelium discoideum (Social amoeba).